Reading from the N-terminus, the 264-residue chain is Thymidylate synthase (264 aa).

Residue Arg-21 coordinates dUMP. His-51 serves as a coordination point for (6R)-5,10-methylene-5,6,7,8-tetrahydrofolate. Residue 126-127 (RR) coordinates dUMP. The Nucleophile role is filled by Cys-146. Residues 166–169 (RSCD), Asn-177, and 207–209 (HLY) each bind dUMP. (6R)-5,10-methylene-5,6,7,8-tetrahydrofolate is bound at residue Asp-169. Ala-263 serves as a coordination point for (6R)-5,10-methylene-5,6,7,8-tetrahydrofolate.

It belongs to the thymidylate synthase family. Bacterial-type ThyA subfamily. Homodimer.

It is found in the cytoplasm. It catalyses the reaction dUMP + (6R)-5,10-methylene-5,6,7,8-tetrahydrofolate = 7,8-dihydrofolate + dTMP. It participates in pyrimidine metabolism; dTTP biosynthesis. Functionally, catalyzes the reductive methylation of 2'-deoxyuridine-5'-monophosphate (dUMP) to 2'-deoxythymidine-5'-monophosphate (dTMP) while utilizing 5,10-methylenetetrahydrofolate (mTHF) as the methyl donor and reductant in the reaction, yielding dihydrofolate (DHF) as a by-product. This enzymatic reaction provides an intracellular de novo source of dTMP, an essential precursor for DNA biosynthesis. This Shewanella putrefaciens (strain CN-32 / ATCC BAA-453) protein is Thymidylate synthase.